A 522-amino-acid chain; its full sequence is Putative zinc finger protein 286B (522 aa).

Residues 1–30 (METDLAEMPEKGVLSSQDSPHFQEKSTEEG) are disordered. 10 C2H2-type zinc fingers span residues 244-266 (HKCN…QRVH), 272-294 (YTCN…QRTH), 299-321 (FECR…QRIH), 327-349 (YECN…QLIH), 355-377 (YECN…QRTH), 383-405 (YKCQ…QRVH), 411-433 (YECS…QRIH), 439-461 (YECS…QRIH), 467-489 (YKCS…QRTH), and 495-517 (FRCN…QRVH).

This sequence belongs to the krueppel C2H2-type zinc-finger protein family.

The protein resides in the nucleus. Its function is as follows. May be involved in transcriptional regulation. In Homo sapiens (Human), this protein is Putative zinc finger protein 286B (ZNF286B).